A 179-amino-acid polypeptide reads, in one-letter code: Inner membrane-spanning protein YciB (179 aa).

5 helical membrane-spanning segments follow: residues 22-42 (IYAA…YSWV), 50-70 (MALI…FFHN), 76-96 (WKVT…QWVM), 121-141 (LAWA…AFWL), and 149-169 (FKVF…GIYI).

Belongs to the YciB family.

The protein resides in the cell inner membrane. Functionally, plays a role in cell envelope biogenesis, maintenance of cell envelope integrity and membrane homeostasis. In Klebsiella pneumoniae (strain 342), this protein is Inner membrane-spanning protein YciB.